Reading from the N-terminus, the 231-residue chain is MRNILPFLTRIPVKGDFEKARNELWAFPLVALVSSALPTLILYLGLPLSNLLAVLALYWTIGLLHLDGLADWADGIMAKGDRERKIEVMKDVNTGIAGLFAVVIVLLLQVYSLQLLPFYALFLAELNSKYAMLLALATKRPLGKGLGAYFMEGMNGRQLALGTLLYVLLGLSVVLFEPRALAGILGLLFGVHIIRISLKNFDGLNGDCLGATAEITRAGTLVVMALVWWYL.

A run of 6 helical transmembrane segments spans residues 24–44, 46–66, 96–116, 159–176, 181–198, and 209–229; these read LWAF…ILYL, LPLS…LLHL, IAGL…LQLL, LALG…VVLF, LAGI…RISL, and LGAT…LVWW.

This sequence belongs to the CobS family. Mg(2+) serves as cofactor.

The protein resides in the cell membrane. The enzyme catalyses alpha-ribazole + adenosylcob(III)inamide-GDP = adenosylcob(III)alamin + GMP + H(+). The catalysed reaction is alpha-ribazole 5'-phosphate + adenosylcob(III)inamide-GDP = adenosylcob(III)alamin 5'-phosphate + GMP + H(+). It functions in the pathway cofactor biosynthesis; adenosylcobalamin biosynthesis; adenosylcobalamin from cob(II)yrinate a,c-diamide: step 7/7. Functionally, joins adenosylcobinamide-GDP and alpha-ribazole to generate adenosylcobalamin (Ado-cobalamin). Also synthesizes adenosylcobalamin 5'-phosphate from adenosylcobinamide-GDP and alpha-ribazole 5'-phosphate. This is Adenosylcobinamide-GDP ribazoletransferase from Thermococcus kodakarensis (strain ATCC BAA-918 / JCM 12380 / KOD1) (Pyrococcus kodakaraensis (strain KOD1)).